Here is a 265-residue protein sequence, read N- to C-terminus: MVFGQLYALFIFTLSCCISKTVQADSSKESSSFISFDKESNWDTISTISSTADVISSVDSAIAVFEFDNFSLLDNLMIDEEYPFFNRFFANDVSLTVHDDSPLNISQSLSPIMEQFTVDELPESASDLLYEYSLDDKSIVLFKFTSDAYDLKKLDEFIDSCLSFLEDKSGDNLTVVINSLGWAFEDEDGDDEYATEETLSHHDNNKGKEGDDDILSSIWTEGLLMCLIVSALLLFILIVALSWISNLDITYGALEKSTNPIKKNN.

The N-terminal stretch at 1-24 (MVFGQLYALFIFTLSCCISKTVQA) is a signal peptide. Topologically, residues 25–223 (DSSKESSSFI…ILSSIWTEGL (199 aa)) are vacuolar. Asn-69, Asn-104, and Asn-172 each carry an N-linked (GlcNAc...) asparagine glycan. The helical transmembrane segment at 224–244 (LMCLIVSALLLFILIVALSWI) threads the bilayer. The Cytoplasmic portion of the chain corresponds to 245–265 (SNLDITYGALEKSTNPIKKNN). The short motif at 262-265 (KKNN) is the ER retention motif element.

This sequence belongs to the VOA1 family. As to quaternary structure, V-ATPase is a heteromultimeric enzyme composed of a peripheral catalytic V1 complex (components A to H) attached to an integral membrane V0 proton pore complex (components: a, c, c', c'', d, e, f and VOA1). Interacts with VMA21. Associates with the assembling V0 complex.

It is found in the vacuole membrane. Its subcellular location is the endoplasmic reticulum membrane. Its function is as follows. Accessory component of the V0 complex of vacuolar(H+)-ATPase (V-ATPase), a multisubunit enzyme composed of a peripheral complex (V1) that hydrolyzes ATP and a membrane integral complex (V0) that translocates protons. V-ATPase is responsible for acidifying and maintaining the pH of intracellular compartments. Functions with VMA21 in assembly of the V0 complex. The protein is V0 assembly protein 1 (VOA1) of Saccharomyces cerevisiae (strain ATCC 204508 / S288c) (Baker's yeast).